The following is a 375-amino-acid chain: Queuine tRNA-ribosyltransferase (375 aa).

Asp93 (proton acceptor) is an active-site residue. Substrate contacts are provided by residues Asp93–Tyr97, Asp147, Gln194, and Gly221. The RNA binding stretch occupies residues Gly252–Asp258. Catalysis depends on Asp271, which acts as the Nucleophile. The RNA binding; important for wobble base 34 recognition stretch occupies residues Thr276 to Arg280. Zn(2+) is bound by residues Cys309, Cys311, Cys314, and His340.

The protein belongs to the queuine tRNA-ribosyltransferase family. In terms of assembly, homodimer. Within each dimer, one monomer is responsible for RNA recognition and catalysis, while the other monomer binds to the replacement base PreQ1. The cofactor is Zn(2+).

The enzyme catalyses 7-aminomethyl-7-carbaguanine + guanosine(34) in tRNA = 7-aminomethyl-7-carbaguanosine(34) in tRNA + guanine. The protein operates within tRNA modification; tRNA-queuosine biosynthesis. Functionally, catalyzes the base-exchange of a guanine (G) residue with the queuine precursor 7-aminomethyl-7-deazaguanine (PreQ1) at position 34 (anticodon wobble position) in tRNAs with GU(N) anticodons (tRNA-Asp, -Asn, -His and -Tyr). Catalysis occurs through a double-displacement mechanism. The nucleophile active site attacks the C1' of nucleotide 34 to detach the guanine base from the RNA, forming a covalent enzyme-RNA intermediate. The proton acceptor active site deprotonates the incoming PreQ1, allowing a nucleophilic attack on the C1' of the ribose to form the product. After dissociation, two additional enzymatic reactions on the tRNA convert PreQ1 to queuine (Q), resulting in the hypermodified nucleoside queuosine (7-(((4,5-cis-dihydroxy-2-cyclopenten-1-yl)amino)methyl)-7-deazaguanosine). The chain is Queuine tRNA-ribosyltransferase from Sphingopyxis alaskensis (strain DSM 13593 / LMG 18877 / RB2256) (Sphingomonas alaskensis).